The chain runs to 186 residues: MELPRLYAITDRKKYGENFLETLEKILKKGVRMVQLREKDLKDRELYKLAKEVRALTKKYKALLLINERFDIALAVEADGVHLPEQSFPPSVVKRVNPNFIVGFSAHSLESAKYAEKEGADFITLSPIFKTSSHPEAQPIGLKTLKEVSEKVNIPVYALGGITWEKIKVCYKNGAYGIAGISMFLE.

4-amino-2-methyl-5-(diphosphooxymethyl)pyrimidine-binding positions include 35-39 (QLREK) and N67. E68 is a binding site for Mg(2+). S105 serves as a coordination point for 4-amino-2-methyl-5-(diphosphooxymethyl)pyrimidine. A 2-[(2R,5Z)-2-carboxy-4-methylthiazol-5(2H)-ylidene]ethyl phosphate-binding site is contributed by 131–133 (TSS). A 4-amino-2-methyl-5-(diphosphooxymethyl)pyrimidine-binding site is contributed by H134. 2-[(2R,5Z)-2-carboxy-4-methylthiazol-5(2H)-ylidene]ethyl phosphate contacts are provided by residues G161 and 181-182 (IS).

It belongs to the thiamine-phosphate synthase family. Requires Mg(2+) as cofactor.

It catalyses the reaction 2-[(2R,5Z)-2-carboxy-4-methylthiazol-5(2H)-ylidene]ethyl phosphate + 4-amino-2-methyl-5-(diphosphooxymethyl)pyrimidine + 2 H(+) = thiamine phosphate + CO2 + diphosphate. The catalysed reaction is 2-(2-carboxy-4-methylthiazol-5-yl)ethyl phosphate + 4-amino-2-methyl-5-(diphosphooxymethyl)pyrimidine + 2 H(+) = thiamine phosphate + CO2 + diphosphate. It carries out the reaction 4-methyl-5-(2-phosphooxyethyl)-thiazole + 4-amino-2-methyl-5-(diphosphooxymethyl)pyrimidine + H(+) = thiamine phosphate + diphosphate. The protein operates within cofactor biosynthesis; thiamine diphosphate biosynthesis; thiamine phosphate from 4-amino-2-methyl-5-diphosphomethylpyrimidine and 4-methyl-5-(2-phosphoethyl)-thiazole: step 1/1. Functionally, condenses 4-methyl-5-(beta-hydroxyethyl)thiazole monophosphate (THZ-P) and 2-methyl-4-amino-5-hydroxymethyl pyrimidine pyrophosphate (HMP-PP) to form thiamine monophosphate (TMP). The protein is Putative thiamine-phosphate synthase 2 (thiE2) of Aquifex aeolicus (strain VF5).